Consider the following 779-residue polypeptide: Filament-like plant protein 1 (779 aa).

The span at 1–14 (MEKRKRESSERSFG) shows a compositional bias: basic and acidic residues. Disordered stretches follow at residues 1–55 (MEKR…ETEK), 253–274 (ASFN…MDVS), and 315–336 (PETP…VVVP). The stretch at 47–200 (VSLEVETEKE…KENVMLRHEL (154 aa)) forms a coiled coil. A compositionally biased stretch (basic and acidic residues) spans 256–272 (NDHRSTDSHSDGGERMD). Residues 324–336 (SGPESVTEEVVVP) are compositionally biased toward low complexity. Residues 337–674 (SENSLASEIE…ANCQKTIASL (338 aa)) adopt a coiled-coil conformation. Residues 718–731 (FMTRNHPESIKPTK) are compositionally biased toward basic and acidic residues. The tract at residues 718 to 764 (FMTRNHPESIKPTKETSPSSSSSTASAAVSMPVSTNRGSSEKNRNGF) is disordered. Positions 733–752 (TSPSSSSSTASAAVSMPVST) are enriched in low complexity.

Belongs to the FPP family. As to quaternary structure, interacts with WPP/MAF proteins.

In Arabidopsis thaliana (Mouse-ear cress), this protein is Filament-like plant protein 1 (FPP1).